The chain runs to 380 residues: Histone deacetylase-like amidohydrolase (380 aa).

Residue His-144 is the Proton donor/acceptor of the active site. Residues Asp-181, His-183, and Asp-269 each contribute to the Zn(2+) site.

The protein belongs to the histone deacetylase family. Homotetramer; dimer of head-to-head dimers. Zn(2+) serves as cofactor.

Is inhibited by azobenzenes, stilbenes and arylazopyrazoles. Functionally, probable protein deacetylase that catalyzes deacetylation of acetylated lysine residues. In vitro, exhibits high activity against artificial HDAC (histone deacetylase) substrates containing acetylated and trifluoroacetylated lysine residues. Is not able to deacetylate acetylated polyamines. The chain is Histone deacetylase-like amidohydrolase from Pseudomonas aeruginosa (strain ATCC 15692 / DSM 22644 / CIP 104116 / JCM 14847 / LMG 12228 / 1C / PRS 101 / PAO1).